The chain runs to 244 residues: tRNA (guanine-N(1)-)-methyltransferase (244 aa).

Residues G123 and 143–148 contribute to the S-adenosyl-L-methionine site; that span reads LGDFVM.

Belongs to the RNA methyltransferase TrmD family. In terms of assembly, homodimer.

Its subcellular location is the cytoplasm. The enzyme catalyses guanosine(37) in tRNA + S-adenosyl-L-methionine = N(1)-methylguanosine(37) in tRNA + S-adenosyl-L-homocysteine + H(+). Functionally, specifically methylates guanosine-37 in various tRNAs. The polypeptide is tRNA (guanine-N(1)-)-methyltransferase (Ruegeria sp. (strain TM1040) (Silicibacter sp.)).